An 834-amino-acid polypeptide reads, in one-letter code: U-box domain-containing protein 33 (834 aa).

Residues 232–308 form a disordered region; sequence FSTPESEHQH…SPSSFPDGVD (77 aa). Composition is skewed to polar residues over residues 243-273 and 284-293; these read SRVQ…GSLN and SEVTGSATVM. A coiled-coil region spans residues 334–462; the sequence is LRRQKAEKNA…SHAETSTLQL (129 aa). Positions 481 to 744 constitute a Protein kinase domain; the sequence is FDSTLKIGEG…EVWRVLEPMR (264 aa). Residues 487–495 and Lys-508 each bind ATP; that span reads IGEGGYGSI. Asp-603 functions as the Proton acceptor in the catalytic mechanism. Residues 762 to 834 enclose the U-box domain; sequence IAPPYFICPI…AIQEWLQHHL (73 aa).

Belongs to the protein kinase superfamily. Ser/Thr protein kinase family.

The enzyme catalyses L-seryl-[protein] + ATP = O-phospho-L-seryl-[protein] + ADP + H(+). It carries out the reaction L-threonyl-[protein] + ATP = O-phospho-L-threonyl-[protein] + ADP + H(+). It catalyses the reaction S-ubiquitinyl-[E2 ubiquitin-conjugating enzyme]-L-cysteine + [acceptor protein]-L-lysine = [E2 ubiquitin-conjugating enzyme]-L-cysteine + N(6)-ubiquitinyl-[acceptor protein]-L-lysine.. Its pathway is protein modification; protein ubiquitination. Functionally, functions as an E3 ubiquitin ligase. This is U-box domain-containing protein 33 (PUB33) from Arabidopsis thaliana (Mouse-ear cress).